Consider the following 213-residue polypeptide: Large ribosomal subunit protein uL1 (213 aa).

The protein belongs to the universal ribosomal protein uL1 family. As to quaternary structure, part of the 50S ribosomal subunit.

In terms of biological role, binds directly to 23S rRNA. Probably involved in E site tRNA release. Protein L1 is also a translational repressor protein, it controls the translation of its operon by binding to its mRNA. The protein is Large ribosomal subunit protein uL1 of Picrophilus torridus (strain ATCC 700027 / DSM 9790 / JCM 10055 / NBRC 100828 / KAW 2/3).